Reading from the N-terminus, the 497-residue chain is Acetyl-coenzyme A carboxylase carboxyl transferase subunit beta (497 aa).

Positions 217-489 (LWLQCDNCYG…NQNSNQYSQY (273 aa)) constitute a CoA carboxyltransferase N-terminal domain. The Zn(2+) site is built by cysteine 221, cysteine 224, cysteine 240, and cysteine 243. The C4-type zinc-finger motif lies at 221-243 (CDNCYGLNYKKVLKSKMTICEQC).

The protein belongs to the AccD/PCCB family. Acetyl-CoA carboxylase is a heterohexamer composed of biotin carboxyl carrier protein, biotin carboxylase and 2 subunits each of ACCase subunit alpha and ACCase plastid-coded subunit beta (accD). The cofactor is Zn(2+).

It is found in the plastid. The catalysed reaction is N(6)-carboxybiotinyl-L-lysyl-[protein] + acetyl-CoA = N(6)-biotinyl-L-lysyl-[protein] + malonyl-CoA. It functions in the pathway lipid metabolism; malonyl-CoA biosynthesis; malonyl-CoA from acetyl-CoA: step 1/1. Its function is as follows. Component of the acetyl coenzyme A carboxylase (ACC) complex. Biotin carboxylase (BC) catalyzes the carboxylation of biotin on its carrier protein (BCCP) and then the CO(2) group is transferred by the transcarboxylase to acetyl-CoA to form malonyl-CoA. This Cuscuta reflexa (Southern Asian dodder) protein is Acetyl-coenzyme A carboxylase carboxyl transferase subunit beta.